Reading from the N-terminus, the 262-residue chain is Shikimate dehydrogenase (NADP(+)) (262 aa).

Residues 15 to 17 (SRS) and threonine 62 contribute to the shikimate site. Lysine 66 serves as the catalytic Proton acceptor. Glutamate 78 contacts NADP(+). Shikimate contacts are provided by asparagine 87 and aspartate 102. NADP(+) is bound by residues 126–130 (GAGGA), 150–155 (NRTQQR), and methionine 214. Residue tyrosine 216 coordinates shikimate. Glycine 236 contacts NADP(+).

Belongs to the shikimate dehydrogenase family. As to quaternary structure, homodimer.

It catalyses the reaction shikimate + NADP(+) = 3-dehydroshikimate + NADPH + H(+). It participates in metabolic intermediate biosynthesis; chorismate biosynthesis; chorismate from D-erythrose 4-phosphate and phosphoenolpyruvate: step 4/7. Functionally, involved in the biosynthesis of the chorismate, which leads to the biosynthesis of aromatic amino acids. Catalyzes the reversible NADPH linked reduction of 3-dehydroshikimate (DHSA) to yield shikimate (SA). The polypeptide is Shikimate dehydrogenase (NADP(+)) (Acinetobacter baylyi (strain ATCC 33305 / BD413 / ADP1)).